A 141-amino-acid chain; its full sequence is Nucleoside diphosphate kinase (141 aa).

The ATP site is built by Lys11, Phe59, Arg87, Thr93, Arg104, and Asn114. Catalysis depends on His117, which acts as the Pros-phosphohistidine intermediate.

The protein belongs to the NDK family. In terms of assembly, homotetramer. It depends on Mg(2+) as a cofactor.

It is found in the cytoplasm. The enzyme catalyses a 2'-deoxyribonucleoside 5'-diphosphate + ATP = a 2'-deoxyribonucleoside 5'-triphosphate + ADP. It carries out the reaction a ribonucleoside 5'-diphosphate + ATP = a ribonucleoside 5'-triphosphate + ADP. Functionally, major role in the synthesis of nucleoside triphosphates other than ATP. The ATP gamma phosphate is transferred to the NDP beta phosphate via a ping-pong mechanism, using a phosphorylated active-site intermediate. In Paraburkholderia phymatum (strain DSM 17167 / CIP 108236 / LMG 21445 / STM815) (Burkholderia phymatum), this protein is Nucleoside diphosphate kinase.